Here is a 171-residue protein sequence, read N- to C-terminus: Der GTPase-activating protein YihI (171 aa).

Disordered regions lie at residues 1 to 99 (MKKP…QAEL) and 145 to 171 (LSYDDDEEDDEEDEKQEDMMRLLRGGN). Basic and acidic residues predominate over residues 20–30 (TREELNQEARD). The segment covering 31-40 (RKRLKKHRGH) has biased composition (basic residues). A compositionally biased stretch (acidic residues) spans 147 to 160 (YDDDEEDDEEDEKQ).

It belongs to the YihI family. In terms of assembly, interacts with Der.

Functionally, a GTPase-activating protein (GAP) that modifies Der/EngA GTPase function. May play a role in ribosome biogenesis. This chain is Der GTPase-activating protein YihI, found in Salmonella agona (strain SL483).